The sequence spans 210 residues: Large ribosomal subunit protein uL3 (210 aa).

The segment at 134 to 153 (THGNSLSHRAPGSIGQNQTP) is disordered. Gln151 is subject to N5-methylglutamine.

The protein belongs to the universal ribosomal protein uL3 family. In terms of assembly, part of the 50S ribosomal subunit. Forms a cluster with proteins L14 and L19. Post-translationally, methylated by PrmB.

In terms of biological role, one of the primary rRNA binding proteins, it binds directly near the 3'-end of the 23S rRNA, where it nucleates assembly of the 50S subunit. The chain is Large ribosomal subunit protein uL3 from Aeromonas salmonicida (strain A449).